The sequence spans 325 residues: Aldo-keto reductase family 1 member A1 (325 aa).

N-acetylalanine is present on A2. S4 bears the Phosphoserine mark. NADP(+) is bound by residues 11 to 20, T21, and W22; that span reads GQKMPLIGLG. At S38 the chain carries Phosphoserine. D45 lines the NADP(+) pocket. Residue Y50 is the Proton donor of the active site. An N6-acetyllysine; alternate modification is found at K127. K127 bears the N6-succinyllysine; alternate mark. K145 is modified (N6-succinyllysine). Residues S162, N163, S211, L213, S215, S216, K263, S264, I265, T266, R269, Q272, and N273 each contribute to the NADP(+) site. S211 is modified (phosphoserine).

This sequence belongs to the aldo/keto reductase family. In terms of assembly, monomer. As to expression, widely expressed. Highly expressed in kidney, salivary gland and liver. Detected in trachea, stomach, brain, lung, prostate, placenta, mammary gland, small intestine and lung.

The protein localises to the cytoplasm. Its subcellular location is the cytosol. It localises to the apical cell membrane. It catalyses the reaction a primary alcohol + NADP(+) = an aldehyde + NADPH + H(+). The catalysed reaction is allyl alcohol + NADP(+) = acrolein + NADPH + H(+). The enzyme catalyses glycerol + NADP(+) = D-glyceraldehyde + NADPH + H(+). It carries out the reaction glycerol + NADP(+) = L-glyceraldehyde + NADPH + H(+). It catalyses the reaction hydroxyacetone + NADP(+) = methylglyoxal + NADPH + H(+). The catalysed reaction is a 4-hydroxynonen-1-ol + NADP(+) = a 4-hydroxynonenal + NADPH + H(+). The enzyme catalyses 3-deoxyfructose + NADP(+) = 3-deoxyglucosone + NADPH + H(+). It carries out the reaction L-gulonate + NADP(+) = aldehydo-D-glucuronate + NADPH + H(+). It catalyses the reaction L-gulono-1,4-lactone + NADP(+) = D-glucurono-3,6-lactone + NADPH + H(+). The catalysed reaction is pyridine 3-methanol + NADP(+) = pyridine-3-carbaldehyde + NADPH + H(+). The enzyme catalyses S-nitroso-CoA + NADPH + H(+) = sulfinamide-CoA + NADP(+). It carries out the reaction S-nitrosoglutathione + NADPH + H(+) = S-(hydroxysulfenamide)glutathione + NADP(+). Catalyzes the NADPH-dependent reduction of a wide variety of carbonyl-containing compounds to their corresponding alcohols. Displays enzymatic activity towards endogenous metabolites such as aromatic and aliphatic aldehydes, ketones, monosaccharides and bile acids, with a preference for negatively charged substrates, such as glucuronate and succinic semialdehyde. Functions as a detoxifiying enzyme by reducing a range of toxic aldehydes. Reduces methylglyoxal and 3-deoxyglucosone, which are present at elevated levels under hyperglycemic conditions and are cytotoxic. Involved also in the detoxification of lipid-derived aldehydes like acrolein. Plays a role in the activation of procarcinogens, such as polycyclic aromatic hydrocarbon trans-dihydrodiols, and in the metabolism of various xenobiotics and drugs, including the anthracyclines doxorubicin (DOX) and daunorubicin (DAUN). Also acts as an inhibitor of protein S-nitrosylation by mediating degradation of S-nitroso-coenzyme A (S-nitroso-CoA), a cofactor required to S-nitrosylate proteins. S-nitroso-CoA reductase activity is involved in reprogramming intermediary metabolism in renal proximal tubules, notably by inhibiting protein S-nitrosylation of isoform 2 of PKM (PKM2). Also acts as a S-nitroso-glutathione reductase by catalyzing the NADPH-dependent reduction of S-nitrosoglutathione. Displays no reductase activity towards retinoids. This is Aldo-keto reductase family 1 member A1 (AKR1A1) from Homo sapiens (Human).